Reading from the N-terminus, the 316-residue chain is MYRTVLSVFYPMFFILVIPSLILLIFIILRYSPDCFQTFKYILLVTCISQIVAVTTNCLIQIRQVSNLTPMEIWCYGPLRHFTALIAYSTYFLTQTAVVISNVLIFLTIYLKYLATKINTRKTCNYGVTFFILSPIFIALGAQTSLILTEGIPSENQDHLEKINFDISDHAVIGYIRLKTLPSIIITFVITGTILILPAVGLLLRKKTLRNINSNKFSITKKALIKGFINGVTLQVFLPLICYIPVFGSFLVLAETKTEVPFEQYFFSVLVMLPMLFDPYIILYSVAPYRKQIEKWIKTKRRQSILIVDPAARIGF.

7 consecutive transmembrane segments (helical) span residues 8-28, 42-62, 91-111, 128-148, 184-204, 234-254, and 266-286; these read VFYP…IFII, ILLV…LIQI, YFLT…TIYL, VTFF…SLIL, IIIT…GLLL, LQVF…LVLA, and FFSV…LYSV.

This sequence belongs to the nematode receptor-like protein srd family.

Its subcellular location is the membrane. In Caenorhabditis elegans, this protein is Serpentine receptor class delta-45 (srd-45).